The sequence spans 315 residues: BTB/POZ domain-containing adapter for CUL3-mediated RhoA degradation protein 3 (315 aa).

An N-acetylmethionine modification is found at Met1. Ser23 carries the phosphoserine modification. Residues 32 to 100 (KYVKLNVGGA…LRDGAVPLPE (69 aa)) enclose the BTB domain. The short motif at 239 to 245 (QTKVEFP) is the Interaction with PCNA element. The tract at residues 269–294 (NALLEATGGAAGRSHHLDEDEERERE) is disordered.

It belongs to the BACURD family. Homotetramer; forms a two-fold symmetric tetramer in solution. Interacts with CUL3; interaction is direct and forms a 5:5 heterodecamer. Component of the BCR(BACURD3) E3 ubiquitin ligase complex, at least composed of CUL3, KCTD10/BACURD3 and RBX1. Interacts with DNA polymerase delta subunit 2/POLD2. Interacts with PCNA. In terms of tissue distribution, expressed at highest levels in lung. Also detected in testis and heart. Very low expression, if any, in brain, liver, spleen, kidney and skeletal muscle.

It localises to the nucleus. It functions in the pathway protein modification; protein ubiquitination. Functionally, substrate-specific adapter of a BCR (BTB-CUL3-RBX1) E3 ubiquitin-protein ligase complex. The BCR(BACURD3) E3 ubiquitin ligase complex mediates the ubiquitination of target proteins, leading to their degradation by the proteasome. This Rattus norvegicus (Rat) protein is BTB/POZ domain-containing adapter for CUL3-mediated RhoA degradation protein 3 (Kctd10).